A 128-amino-acid polypeptide reads, in one-letter code: MSSIPEGLKYSAEHEWIAEAGAAGTVRVGITDFAQDALGDVVYVDLPEVGTEVTAGTAVGEVESTKSVSDIYAPVSGTVAAVNDELDGEPGLVNSAPYEGGWLFEITLADEAQLEGLMDAEGYASHTS.

Residues T25 to T107 form the Lipoyl-binding domain. K66 is modified (N6-lipoyllysine).

This sequence belongs to the GcvH family. As to quaternary structure, the glycine cleavage system is composed of four proteins: P, T, L and H. It depends on (R)-lipoate as a cofactor.

In terms of biological role, the glycine cleavage system catalyzes the degradation of glycine. The H protein shuttles the methylamine group of glycine from the P protein to the T protein. This is Glycine cleavage system H protein from Micrococcus luteus (strain ATCC 4698 / DSM 20030 / JCM 1464 / CCM 169 / CCUG 5858 / IAM 1056 / NBRC 3333 / NCIMB 9278 / NCTC 2665 / VKM Ac-2230) (Micrococcus lysodeikticus).